A 430-amino-acid chain; its full sequence is Asparagine--tRNA ligase (430 aa).

It belongs to the class-II aminoacyl-tRNA synthetase family. As to quaternary structure, homodimer.

It localises to the cytoplasm. The enzyme catalyses tRNA(Asn) + L-asparagine + ATP = L-asparaginyl-tRNA(Asn) + AMP + diphosphate + H(+). The chain is Asparagine--tRNA ligase from Pelotomaculum thermopropionicum (strain DSM 13744 / JCM 10971 / SI).